Reading from the N-terminus, the 134-residue chain is ATP synthase epsilon chain, chloroplastic (134 aa).

Belongs to the ATPase epsilon chain family. In terms of assembly, F-type ATPases have 2 components, CF(1) - the catalytic core - and CF(0) - the membrane proton channel. CF(1) has five subunits: alpha(3), beta(3), gamma(1), delta(1), epsilon(1). CF(0) has three main subunits: a, b and c.

The protein resides in the plastid. It localises to the chloroplast thylakoid membrane. Its function is as follows. Produces ATP from ADP in the presence of a proton gradient across the membrane. This Porphyra purpurea (Red seaweed) protein is ATP synthase epsilon chain, chloroplastic.